A 194-amino-acid polypeptide reads, in one-letter code: Peptidyl-tRNA hydrolase (194 aa).

Tyrosine 16 is a tRNA binding site. Histidine 21 serves as the catalytic Proton acceptor. 3 residues coordinate tRNA: tyrosine 67, asparagine 69, and asparagine 115.

This sequence belongs to the PTH family. As to quaternary structure, monomer.

The protein localises to the cytoplasm. It catalyses the reaction an N-acyl-L-alpha-aminoacyl-tRNA + H2O = an N-acyl-L-amino acid + a tRNA + H(+). In terms of biological role, hydrolyzes ribosome-free peptidyl-tRNAs (with 1 or more amino acids incorporated), which drop off the ribosome during protein synthesis, or as a result of ribosome stalling. Functionally, catalyzes the release of premature peptidyl moieties from peptidyl-tRNA molecules trapped in stalled 50S ribosomal subunits, and thus maintains levels of free tRNAs and 50S ribosomes. This chain is Peptidyl-tRNA hydrolase, found in Synechocystis sp. (strain ATCC 27184 / PCC 6803 / Kazusa).